The sequence spans 448 residues: Solute carrier family 52, riboflavin transporter, member 1 (448 aa).

The next 5 helical transmembrane spans lie at 14–34 (LLVA…WVEL), 47–67 (LPSY…VVTL), 79–99 (VPIQ…APLW), 124–144 (ACCT…PPFL), and 147–167 (FFLG…VQGV). N-linked (GlcNAc...) asparagine glycosylation is present at N178. Residues 191 to 211 (FPASTFFWALTALLVTSAAAF) form a helical membrane-spanning segment. A disordered region spans residues 225-267 (TTGGSGPELQLGSPGAEEEEKEEEEALPLQEPPSQAAGTIPGP). Over residues 240-250 (AEEEEKEEEEA) the composition is skewed to acidic residues. The next 5 helical transmembrane spans lie at 280 to 300 (AFLL…LPSV), 315 to 335 (LAVV…MGVL), 342 to 362 (LVGL…LAIL), 369 to 389 (VGTT…LCVF), and 407 to 427 (ALLA…GAMF).

The protein belongs to the riboflavin transporter family. In terms of tissue distribution, widely expressed. Highly expressed in the testis, placenta and small intestine. Expressed at lower level in other tissues.

The protein localises to the cell membrane. The catalysed reaction is riboflavin(in) = riboflavin(out). The activity is strongly inhibited by riboflavin analogs, such as lumiflavin. Weakly inhibited by flavin adenine dinucleotide (FAD). Functionally, plasma membrane transporter mediating the uptake by cells of the water soluble vitamin B2/riboflavin that plays a key role in biochemical oxidation-reduction reactions of the carbohydrate, lipid, and amino acid metabolism. Humans are unable to synthesize vitamin B2/riboflavin and must obtain it via intestinal absorption. Its function is as follows. (Microbial infection) May function as a cell receptor to retroviral envelopes similar to the porcine endogenous retrovirus (PERV-A). The polypeptide is Solute carrier family 52, riboflavin transporter, member 1 (Homo sapiens (Human)).